The chain runs to 621 residues: 1-deoxy-D-xylulose-5-phosphate synthase (621 aa).

Thiamine diphosphate is bound by residues His-80 and 121–123 (GHS). Residue Asp-152 coordinates Mg(2+). Thiamine diphosphate contacts are provided by residues 153 to 154 (GA), Asn-181, Tyr-288, and Glu-370. Asn-181 is a Mg(2+) binding site.

It belongs to the transketolase family. DXPS subfamily. In terms of assembly, homodimer. Requires Mg(2+) as cofactor. The cofactor is thiamine diphosphate.

The enzyme catalyses D-glyceraldehyde 3-phosphate + pyruvate + H(+) = 1-deoxy-D-xylulose 5-phosphate + CO2. It participates in metabolic intermediate biosynthesis; 1-deoxy-D-xylulose 5-phosphate biosynthesis; 1-deoxy-D-xylulose 5-phosphate from D-glyceraldehyde 3-phosphate and pyruvate: step 1/1. In terms of biological role, catalyzes the acyloin condensation reaction between C atoms 2 and 3 of pyruvate and glyceraldehyde 3-phosphate to yield 1-deoxy-D-xylulose-5-phosphate (DXP). In Vibrio parahaemolyticus serotype O3:K6 (strain RIMD 2210633), this protein is 1-deoxy-D-xylulose-5-phosphate synthase.